Reading from the N-terminus, the 436-residue chain is 3-ketoacyl-CoA thiolase (436 aa).

The active-site Acyl-thioester intermediate is Cys99. Catalysis depends on proton acceptor residues His392 and Cys422.

This sequence belongs to the thiolase-like superfamily. Thiolase family. As to quaternary structure, heterotetramer of two alpha chains (FadJ) and two beta chains (FadI).

It is found in the cytoplasm. It carries out the reaction an acyl-CoA + acetyl-CoA = a 3-oxoacyl-CoA + CoA. It participates in lipid metabolism; fatty acid beta-oxidation. Functionally, catalyzes the final step of fatty acid oxidation in which acetyl-CoA is released and the CoA ester of a fatty acid two carbons shorter is formed. The chain is 3-ketoacyl-CoA thiolase from Shewanella oneidensis (strain ATCC 700550 / JCM 31522 / CIP 106686 / LMG 19005 / NCIMB 14063 / MR-1).